Consider the following 784-residue polypeptide: MSAKSRRPGTGSSQTPNECVQVVVRCRPMSNRERSERSPEVVNVYPNRGVVELQNVVDGNKEQRKVFTYDAAYDASATQTTLYHEVVFPLVSSVLEGFNGCIFAYGQTGTGKTFTMEGVRGNDELMGIIPRTFEQIWLHINRTENFQFLVDVSYLEIYMEELRDLLKPNSKHLEVRERGSGVYVPNLHAINCKSVEDMIKVMQVGNKNRTVGFTNMNEHSSRSHAIFMIKIEMCDTETNTIKVGKLNLIDLAGSERQSKTGASAERLKEASKINLALSSLGNVISALAESSPHVPYRDSKLTRLLQDSLGGNSKTIMIANIGPSNYNYNETLTTLRYASRAKSIQNQPIKNEDPQDAKLKEYQEEIERLKRLIGPQQQQRSEKQVTAKKQRVKKPKKETVTKEMSDSLQVSTIEQPVEDDSDPEGAESESDKENEAEVAKSNEELERERVENSKLAAKLAELEGQLVRGGKNLLDTYSERQIELEKKLVEIAERKKREIEIQQQLELQEETTLEIRERNVSLEQEVELKKRKLSKCYAKYLALQQELNDCKSDHNQDLRELEMAQNELVKELKRQLLIIDNFVPIEVKQRLYTQAKYDEEQEEWKFSSMSLPTPPGGDGKFSSKRPVSHPQRRRPTSEYALQEAKSNSPSSLRFKSENIVNYELEMPCRTTQEYRTPKVSASLQAVLAQAMQTGGDDIDIVDSHTNSLRSRLENIINANANGGAGPGAGVAVGSSIPNVRNIKSSRGLPSAASNLDSNRRPPTGRLPAKKPASAYPKARGLVNK.

Residues 19 to 344 form the Kinesin motor domain; the sequence is CVQVVVRCRP…LRYASRAKSI (326 aa). ATP is bound at residue 106–113; sequence GQTGTGKT. The stretch at 351–385 forms a coiled coil; sequence NEDPQDAKLKEYQEEIERLKRLIGPQQQQRSEKQV. 3 disordered regions span residues 371–449, 605–652, and 742–784; these read RLIG…ERER, KFSS…PSSL, and IKSS…LVNK. Residues 386–396 are compositionally biased toward basic residues; that stretch reads TAKKQRVKKPK. The segment covering 416–428 has biased composition (acidic residues); sequence PVEDDSDPEGAES. Positions 426 to 582 form a coiled coil; sequence AESESDKENE…KRQLLIIDNF (157 aa). Residues 429 to 449 show a composition bias toward basic and acidic residues; it reads ESDKENEAEVAKSNEELERER. Residues 622–634 are compositionally biased toward basic residues; sequence SSKRPVSHPQRRR. Positions 769–778 are enriched in low complexity; sequence KKPASAYPKA.

This sequence belongs to the TRAFAC class myosin-kinesin ATPase superfamily. Kinesin family. Kinesin II subfamily. As to expression, expressed primarily in the central nervous system and in a subset of the peripheral nervous system during embryogenesis.

It is found in the cytoplasm. The protein localises to the cytoskeleton. In terms of biological role, plus-end directed microtubule motor that may be used for anterograde axonal transport and could conceivably move cargos in fly neurons different than those moved by kinesin heavy chain or other plus-end directed motors. The sequence is that of Kinesin-like protein Klp68D (Klp68D) from Drosophila melanogaster (Fruit fly).